Consider the following 78-residue polypeptide: Large ribosomal subunit protein bL28 (78 aa).

Belongs to the bacterial ribosomal protein bL28 family.

This is Large ribosomal subunit protein bL28 from Thioalkalivibrio sulfidiphilus (strain HL-EbGR7).